Here is a 685-residue protein sequence, read N- to C-terminus: Multicopper oxidase VdtB (685 aa).

The signal sequence occupies residues 1 to 17 (MPAYLLLLACNVLLVLG). 2 Plastocyanin-like domains span residues 26–139 (LTWE…IRRK) and 168–368 (IMML…RYKN). The N-linked (GlcNAc...) asparagine glycan is linked to N71. Positions 75, 77, 119, and 121 each coordinate Cu cation. N-linked (GlcNAc...) asparagine glycosylation is found at N178, N229, N253, N432, and N475. In terms of domain architecture, Plastocyanin-like 3 spans 466-585 (DDDLIIRTQN…DNGMAMAILD (120 aa)). H500 serves as a coordination point for Cu cation. N517 is a glycosylation site (N-linked (GlcNAc...) asparagine). The helical transmembrane segment at 627-647 (SLVWAGGAAVVLLSLFIGGLW) threads the bilayer.

It belongs to the multicopper oxidase family.

The protein localises to the membrane. It carries out the reaction 4 semiviriditoxin + O2 = 2 (M)-viriditoxin + 2 H2O. The protein operates within secondary metabolite biosynthesis. Its function is as follows. Multicopper oxidase; part of the gene cluster that mediates the biosynthesis of viriditoxin, one of the 'classical' secondary metabolites produced by fungi and that has antibacterial activity. The first step is performed by the polyketide synthase VdtA which condenses one acetyl-CoA and 6 malonyl-CoA units to form the heptaketide monomer backbone of viriditoxin. The product of VdtA is then O-methylated on C7 by the O-methyltransferase VdtC. The O-methyl group is important for the stereoselective coupling of the monomers at the final step of viriditoxin biosynthesis. The short-chain dehydrogenase/reductase VdtF then acts as a stereospecific reductase converting the pyrone to dihydropyrone via the reduction of the C3-C4 double bond. The FAD-binding monooxygenase VdtE then converts the ketone group into a methyl-ester group to yield semi-viriditoxin. Finally, the laccase VdtB is involved in dimerization of 2 semi-viriditoxin molecules to yield the final viriditoxin. VdtB is responsible for the regioselective 6,6'-coupling of semi-viriditoxin, which yields (M)-viriditoxin and (P)-viriditoxin at a ratio of 1:2. The non-catalytic carboxylesterase-like protein VdtD affects the stereochemistical outcome of the coupling. The highly reducing polyketide synthase VdtX is not involved in viriditoxin synthesis, but might possibly play a role in the production of additional metabolites not identified yet. This Byssochlamys spectabilis (Paecilomyces variotii) protein is Multicopper oxidase VdtB.